The sequence spans 211 residues: Large ribosomal subunit protein uL3 (211 aa).

The segment at 116 to 142 is disordered; that stretch reads GTSGVMKKHGFSGNRASHGVSRNHRLG.

This sequence belongs to the universal ribosomal protein uL3 family. In terms of assembly, part of the 50S ribosomal subunit. Forms a cluster with proteins L14 and L19.

Its function is as follows. One of the primary rRNA binding proteins, it binds directly near the 3'-end of the 23S rRNA, where it nucleates assembly of the 50S subunit. This chain is Large ribosomal subunit protein uL3, found in Fusobacterium nucleatum subsp. nucleatum (strain ATCC 25586 / DSM 15643 / BCRC 10681 / CIP 101130 / JCM 8532 / KCTC 2640 / LMG 13131 / VPI 4355).